A 335-amino-acid polypeptide reads, in one-letter code: Glyceraldehyde-3-phosphate dehydrogenase (335 aa).

NAD(+)-binding positions include 12-13, Asp34, Arg78, and Ser120; that span reads RI. D-glyceraldehyde 3-phosphate is bound by residues 151–153 and Thr182; that span reads SCT. Cys152 serves as the catalytic Nucleophile. Asn183 serves as a coordination point for NAD(+). Residues Arg197, 210-211, and Arg233 each bind D-glyceraldehyde 3-phosphate; that span reads TG. An NAD(+)-binding site is contributed by Asn315.

It belongs to the glyceraldehyde-3-phosphate dehydrogenase family. As to quaternary structure, homotetramer.

The protein resides in the cytoplasm. The catalysed reaction is D-glyceraldehyde 3-phosphate + phosphate + NAD(+) = (2R)-3-phospho-glyceroyl phosphate + NADH + H(+). The protein operates within carbohydrate degradation; glycolysis; pyruvate from D-glyceraldehyde 3-phosphate: step 1/5. Functionally, catalyzes the oxidative phosphorylation of glyceraldehyde 3-phosphate (G3P) to 1,3-bisphosphoglycerate (BPG) using the cofactor NAD. The first reaction step involves the formation of a hemiacetal intermediate between G3P and a cysteine residue, and this hemiacetal intermediate is then oxidized to a thioester, with concomitant reduction of NAD to NADH. The reduced NADH is then exchanged with the second NAD, and the thioester is attacked by a nucleophilic inorganic phosphate to produce BPG. The chain is Glyceraldehyde-3-phosphate dehydrogenase (gap) from Geobacillus stearothermophilus (Bacillus stearothermophilus).